The sequence spans 310 residues: Nucleotide-binding protein MAP_1147 (310 aa).

ATP is bound at residue 30–37 (GLSGAGRG). 81 to 84 (DVRS) contacts GTP.

It belongs to the RapZ-like family.

Its function is as follows. Displays ATPase and GTPase activities. This Mycolicibacterium paratuberculosis (strain ATCC BAA-968 / K-10) (Mycobacterium paratuberculosis) protein is Nucleotide-binding protein MAP_1147.